The following is a 395-amino-acid chain: Obg-like ATPase 1 (395 aa).

The OBG-type G domain maps to 22 to 280; the sequence is LKVGILGLPN…MPEDERQKYL (259 aa). 31 to 36 is an ATP binding site; the sequence is NVGKST. The Mg(2+) site is built by serine 35 and threonine 55. Position 228 (leucine 228) interacts with ATP. The TGS domain occupies 301–384; it reads QLEYFFTSGE…QDGDVIFFKF (84 aa).

Belongs to the TRAFAC class OBG-HflX-like GTPase superfamily. OBG GTPase family. YchF/OLA1 subfamily. Monomer. Mg(2+) is required as a cofactor. In terms of tissue distribution, expressed in the nervous system, pharyngeal muscles and intestine (at protein level).

The protein localises to the cytoplasm. Functionally, hydrolyzes ATP, and can also hydrolyze GTP with lower efficiency. Has lower affinity for GTP. Plays a role in regulating starvation-induced thermotaxis responses in AFD thermosensory neurons. This chain is Obg-like ATPase 1, found in Caenorhabditis elegans.